The primary structure comprises 521 residues: 56 kDa type-specific antigen (521 aa).

An N-terminal signal peptide occupies residues 1–22; that stretch reads MRKIMLIASAMSALSLPFSANA. Residues 64-86 traverse the membrane as a helical segment; that stretch reads LPLIKGMPFGVTLAAGMTITPGV. The tract at residues 386-415 is disordered; it reads LGVDQGQEGGCSKDKKQSDTTAEESKKEGK. The span at 396 to 415 shows a compositional bias: basic and acidic residues; that stretch reads CSKDKKQSDTTAEESKKEGK. Residues 469–484 form a helical membrane-spanning segment; that stretch reads TGMVGSLALGVAANVA.

The protein resides in the cell membrane. Functionally, may be an adherent factor for rickettsial adsorption to the host-cell surface and a determinant of virulence of individual rickettsial strain. It is the major outer membrane protein. The protein is 56 kDa type-specific antigen of Orientia tsutsugamushi (Rickettsia tsutsugamushi).